The primary structure comprises 288 residues: Putative sugar uptake protein gbs2116 (288 aa).

10 consecutive transmembrane segments (helical) span residues 4–26, 33–50, 55–72, 85–107, 117–134, 154–171, 181–200, 207–229, 234–256, and 268–285; these read LLIA…KIGG, FGMT…WLFK, TASL…WSVG, VSVA…GALV, FILG…FYFS, FATI…AVLF, AVIL…FMKF, VVVK…LLAA, LAIA…ILFL, and VVMG…LGIV.

This sequence belongs to the GRP transporter (TC 2.A.7.5) family.

The protein localises to the cell membrane. This Streptococcus agalactiae serotype III (strain NEM316) protein is Putative sugar uptake protein gbs2116.